Here is a 105-residue protein sequence, read N- to C-terminus: Probable tetrachloroethene reductive dehalogenase membrane anchor protein (105 aa).

Helical transmembrane passes span 3-23 (IYDV…QYGI), 35-55 (IPLQ…LAWG), and 66-86 (AIGM…IITY).

Belongs to the PceB family.

The protein resides in the cell membrane. Functionally, may act as a membrane anchor for the tetrachloroethene reductive dehalogenase PceA. In Desulfitobacterium hafniense (Desulfitobacterium frappieri), this protein is Probable tetrachloroethene reductive dehalogenase membrane anchor protein.